The chain runs to 130 residues: UPF0102 protein RPA0323 (130 aa).

Belongs to the UPF0102 family.

This chain is UPF0102 protein RPA0323, found in Rhodopseudomonas palustris (strain ATCC BAA-98 / CGA009).